Here is a 202-residue protein sequence, read N- to C-terminus: Ras-related protein Rab-1A (202 aa).

GTP-binding positions include 15–23, 33–40, 63–67, 121–124, and 151–153; these read GDSGVGKSC, YSESFIST, DTAGQ, NKSD, and SAK. The Effector region signature appears at 37–45; sequence FISTIGVDF. The interval 180-202 is disordered; the sequence is QTVDKNKVVPGSSAPISPKSGCC. Residues Cys-201 and Cys-202 are each lipidated (S-geranylgeranyl cysteine).

Belongs to the small GTPase superfamily. Rab family.

The protein resides in the cell membrane. The chain is Ras-related protein Rab-1A (rab1A) from Dictyostelium discoideum (Social amoeba).